We begin with the raw amino-acid sequence, 235 residues long: Protein shisa-5 (235 aa).

Positions 1 to 26 (MAAPAPSLWTLLLLLLLLPPPPGAHG) are cleaved as a signal peptide. The Extracellular portion of the chain corresponds to 27–105 (ELCRPFGEDN…SSFDSDPMSG (79 aa)). The helical transmembrane segment at 106-126 (FGATVAIGVTIFVVFIATIII) threads the bilayer. At 127-235 (CFTCSCCCLY…TYMDSLKTIP (109 aa)) the chain is on the cytoplasmic side. Positions 157–235 (APYPQPQPQP…TYMDSLKTIP (79 aa)) are disordered. Composition is skewed to pro residues over residues 159–172 (YPQP…PSYP) and 181–211 (PMPP…PPPY).

It belongs to the shisa family. In terms of assembly, interacts with PDCD6; PDCD6 can stabilize SHISA5. As to expression, spleen and thymus.

Its subcellular location is the endoplasmic reticulum membrane. The protein localises to the nucleus membrane. Can induce apoptosis in a caspase-dependent manner and plays a role in p53/TP53-dependent apoptosis. The sequence is that of Protein shisa-5 (Shisa5) from Mus musculus (Mouse).